A 439-amino-acid polypeptide reads, in one-letter code: UDP-N-acetylglucosamine--N-acetylmuramyl-(pentapeptide) pyrophosphoryl-undecaprenol N-acetylglucosamine transferase (439 aa).

UDP-N-acetyl-alpha-D-glucosamine is bound by residues 25-27 (TGG), Arg-218, Ser-248, and Gln-362.

This sequence belongs to the glycosyltransferase 28 family. MurG subfamily.

The protein resides in the cell membrane. It catalyses the reaction di-trans,octa-cis-undecaprenyl diphospho-N-acetyl-alpha-D-muramoyl-L-alanyl-D-glutamyl-meso-2,6-diaminopimeloyl-D-alanyl-D-alanine + UDP-N-acetyl-alpha-D-glucosamine = di-trans,octa-cis-undecaprenyl diphospho-[N-acetyl-alpha-D-glucosaminyl-(1-&gt;4)]-N-acetyl-alpha-D-muramoyl-L-alanyl-D-glutamyl-meso-2,6-diaminopimeloyl-D-alanyl-D-alanine + UDP + H(+). Its pathway is cell wall biogenesis; peptidoglycan biosynthesis. In terms of biological role, cell wall formation. Catalyzes the transfer of a GlcNAc subunit on undecaprenyl-pyrophosphoryl-MurNAc-pentapeptide (lipid intermediate I) to form undecaprenyl-pyrophosphoryl-MurNAc-(pentapeptide)GlcNAc (lipid intermediate II). The polypeptide is UDP-N-acetylglucosamine--N-acetylmuramyl-(pentapeptide) pyrophosphoryl-undecaprenol N-acetylglucosamine transferase (Roseiflexus sp. (strain RS-1)).